The primary structure comprises 136 residues: MADYQFQRVIRFGDTDAAGVVYFAQLLSICHEAYEAAIAALGIELRSFFSDRGSVILPIVHAEIDYQRPTYCGDRLEIELQATALGRDRFRVDYRLSHNHQPVATAQTIHLCLESQTRQRSPLPERLQDWLQITAD.

The active site involves D16.

This sequence belongs to the 4-hydroxybenzoyl-CoA thioesterase family. DHNA-CoA hydrolase subfamily.

It carries out the reaction 1,4-dihydroxy-2-naphthoyl-CoA + H2O = 1,4-dihydroxy-2-naphthoate + CoA + H(+). It functions in the pathway cofactor biosynthesis; phylloquinone biosynthesis. Its pathway is quinol/quinone metabolism; 1,4-dihydroxy-2-naphthoate biosynthesis; 1,4-dihydroxy-2-naphthoate from chorismate: step 7/7. Its function is as follows. Catalyzes the hydrolysis of 1,4-dihydroxy-2-naphthoyl-CoA (DHNA-CoA) to 1,4-dihydroxy-2-naphthoate (DHNA), a reaction involved in phylloquinone (vitamin K1) biosynthesis. The protein is 1,4-dihydroxy-2-naphthoyl-CoA hydrolase of Synechococcus sp. (strain ATCC 27144 / PCC 6301 / SAUG 1402/1) (Anacystis nidulans).